Reading from the N-terminus, the 197-residue chain is Phosphoheptose isomerase (197 aa).

The region spanning 36-197 (MVNALLNEGK…IDSQLFGSEE (162 aa)) is the SIS domain. Residue 51–53 (NGG) coordinates substrate. Histidine 60 and glutamate 64 together coordinate Zn(2+). Substrate-binding positions include glutamate 64, 93 to 94 (ND), 119 to 121 (STS), serine 124, and glutamine 174. 2 residues coordinate Zn(2+): glutamine 174 and histidine 182.

The protein belongs to the SIS family. GmhA subfamily. In terms of assembly, homotetramer. Zn(2+) is required as a cofactor.

The protein localises to the cytoplasm. The catalysed reaction is 2 D-sedoheptulose 7-phosphate = D-glycero-alpha-D-manno-heptose 7-phosphate + D-glycero-beta-D-manno-heptose 7-phosphate. Its pathway is carbohydrate biosynthesis; D-glycero-D-manno-heptose 7-phosphate biosynthesis; D-glycero-alpha-D-manno-heptose 7-phosphate and D-glycero-beta-D-manno-heptose 7-phosphate from sedoheptulose 7-phosphate: step 1/1. Catalyzes the isomerization of sedoheptulose 7-phosphate in D-glycero-D-manno-heptose 7-phosphate. The chain is Phosphoheptose isomerase from Pseudomonas fluorescens (strain SBW25).